We begin with the raw amino-acid sequence, 225 residues long: NAD(P)H-hydrate epimerase (225 aa).

A YjeF N-terminal domain is found at 9 to 209 (MQTIDNYTVE…DIGLLTPQDF (201 aa)). 57-61 (NNGAD) provides a ligand contact to (6S)-NADPHX. The K(+) site is built by N58 and D119. (6S)-NADPHX is bound by residues 123-129 (GTGLNNL) and D152. T155 is a K(+) binding site.

The protein belongs to the NnrE/AIBP family. Requires K(+) as cofactor.

The enzyme catalyses (6R)-NADHX = (6S)-NADHX. It catalyses the reaction (6R)-NADPHX = (6S)-NADPHX. Catalyzes the epimerization of the S- and R-forms of NAD(P)HX, a damaged form of NAD(P)H that is a result of enzymatic or heat-dependent hydration. This is a prerequisite for the S-specific NAD(P)H-hydrate dehydratase to allow the repair of both epimers of NAD(P)HX. This is NAD(P)H-hydrate epimerase from Leuconostoc sp. (strain C2).